A 124-amino-acid chain; its full sequence is Small ribosomal subunit protein uS13 (124 aa).

The disordered stretch occupies residues 87–124 (GSYRGNRHRKRLPVRGQRTKTNSRTRKGKRRTVGSKTK). Residues 91–124 (GNRHRKRLPVRGQRTKTNSRTRKGKRRTVGSKTK) show a composition bias toward basic residues.

The protein belongs to the universal ribosomal protein uS13 family. As to quaternary structure, part of the 30S ribosomal subunit. Forms a loose heterodimer with protein S19. Forms two bridges to the 50S subunit in the 70S ribosome.

Located at the top of the head of the 30S subunit, it contacts several helices of the 16S rRNA. In the 70S ribosome it contacts the 23S rRNA (bridge B1a) and protein L5 of the 50S subunit (bridge B1b), connecting the 2 subunits; these bridges are implicated in subunit movement. Contacts the tRNAs in the A and P-sites. This chain is Small ribosomal subunit protein uS13, found in Elusimicrobium minutum (strain Pei191).